The chain runs to 103 residues: Putative membrane protein insertion efficiency factor (103 aa).

The disordered stretch occupies residues 68 to 103; it reads HEGGYDPVPLAKQDAKPENNSESESLLNQPTETKSL. The span at 87-103 shows a compositional bias: polar residues; that stretch reads NSESESLLNQPTETKSL.

The protein belongs to the UPF0161 family.

Its subcellular location is the cell inner membrane. Its function is as follows. Could be involved in insertion of integral membrane proteins into the membrane. The sequence is that of Putative membrane protein insertion efficiency factor from Idiomarina loihiensis (strain ATCC BAA-735 / DSM 15497 / L2-TR).